The following is a 255-amino-acid chain: tRNA (guanine-N(1)-)-methyltransferase (255 aa).

S-adenosyl-L-methionine is bound by residues glycine 113 and 133–138 (IGDYVL).

This sequence belongs to the RNA methyltransferase TrmD family. As to quaternary structure, homodimer.

The protein resides in the cytoplasm. The enzyme catalyses guanosine(37) in tRNA + S-adenosyl-L-methionine = N(1)-methylguanosine(37) in tRNA + S-adenosyl-L-homocysteine + H(+). Functionally, specifically methylates guanosine-37 in various tRNAs. The polypeptide is tRNA (guanine-N(1)-)-methyltransferase (Serratia proteamaculans (strain 568)).